We begin with the raw amino-acid sequence, 123 residues long: Late histone H2B.L1 (123 aa).

Over residues 1 to 10 (MPAKAQPAGK) the composition is skewed to low complexity. Residues 1–33 (MPAKAQPAGKKGSKKAKAPRPSGGKKRRRRRKE) form a disordered region. Positions 11–32 (KGSKKAKAPRPSGGKKRRRRRK) are enriched in basic residues. Ser110 is a glycosylation site (O-linked (GlcNAc) serine). A Glycyl lysine isopeptide (Lys-Gly) (interchain with G-Cter in ubiquitin) cross-link involves residue Lys118.

It belongs to the histone H2B family. In terms of assembly, the nucleosome is a histone octamer containing two molecules each of H2A, H2B, H3 and H4 assembled in one H3-H4 heterotetramer and two H2A-H2B heterodimers. The octamer wraps approximately 147 bp of DNA. Monoubiquitination of Lys-118 gives a specific tag for epigenetic transcriptional activation and is also prerequisite for histone H3 'Lys-4' and 'Lys-79' methylation. In terms of processing, glcNAcylation at Ser-110 promotes monoubiquitination of Lys-118. It fluctuates in response to extracellular glucose, and associates with transcribed genes.

The protein localises to the nucleus. Its subcellular location is the chromosome. Its function is as follows. Core component of nucleosome. Nucleosomes wrap and compact DNA into chromatin, limiting DNA accessibility to the cellular machineries which require DNA as a template. Histones thereby play a central role in transcription regulation, DNA repair, DNA replication and chromosomal stability. DNA accessibility is regulated via a complex set of post-translational modifications of histones, also called histone code, and nucleosome remodeling. The polypeptide is Late histone H2B.L1 (Strongylocentrotus purpuratus (Purple sea urchin)).